A 211-amino-acid polypeptide reads, in one-letter code: Cytochrome c biogenesis ATP-binding export protein CcmA (211 aa).

An ABC transporter domain is found at 6 to 211; it reads LQTVALACER…RDIDLGNWAV (206 aa). An ATP-binding site is contributed by 38-45; sequence GPNGSGKT.

This sequence belongs to the ABC transporter superfamily. CcmA exporter (TC 3.A.1.107) family. In terms of assembly, the complex is composed of two ATP-binding proteins (CcmA) and two transmembrane proteins (CcmB).

The protein resides in the cell inner membrane. It catalyses the reaction heme b(in) + ATP + H2O = heme b(out) + ADP + phosphate + H(+). In terms of biological role, part of the ABC transporter complex CcmAB involved in the biogenesis of c-type cytochromes; once thought to export heme, this seems not to be the case, but its exact role is uncertain. Responsible for energy coupling to the transport system. The sequence is that of Cytochrome c biogenesis ATP-binding export protein CcmA from Pseudomonas fluorescens (strain Pf0-1).